A 723-amino-acid polypeptide reads, in one-letter code: DNA-binding protein RFX2 (723 aa).

The disordered stretch occupies residues 1-46; sequence MQNSEGGADSPASVALRPSAAAPPVPASPQRVLVQAASSNPKGAQM. Low complexity predominate over residues 10-20; that stretch reads SPASVALRPSA. Serine 28 is modified (phosphoserine). A DNA-binding region (RFX-type winged-helix) is located at residues 199 to 274; that stretch reads HLQWLLDNYE…YHYYGIRLKP (76 aa). Residues 292 to 332 form a disordered region; it reads QQPMHQKPRYRPAQKTDSLGDSGSHSGLHSTPEQTMAVQSQ. Over residues 308-321 the composition is skewed to low complexity; it reads DSLGDSGSHSGLHS. Over residues 322–332 the composition is skewed to polar residues; the sequence is TPEQTMAVQSQ. Serine 416 carries the phosphoserine modification. The disordered stretch occupies residues 688-723; sequence MGDEQRGSEAGPDARSLGEPLVKRERSDPNHSLQGI.

The protein belongs to the RFX family. As to quaternary structure, homodimer; probably only forms homodimers in testis. Heterodimer; heterodimerizes with RFX1 and RFX3.

The protein localises to the nucleus. Its subcellular location is the cytoplasm. Its function is as follows. Transcription factor that acts as a key regulator of spermatogenesis. Acts by regulating expression of genes required for the haploid phase during spermiogenesis, such as genes required for cilium assembly and function. Recognizes and binds the X-box, a regulatory motif with DNA sequence 5'-GTNRCC(0-3N)RGYAAC-3' present on promoters. Probably activates transcription of the testis-specific histone gene H1-6. This is DNA-binding protein RFX2 (RFX2) from Homo sapiens (Human).